The primary structure comprises 365 residues: UDP-N-acetylglucosamine--N-acetylmuramyl-(pentapeptide) pyrophosphoryl-undecaprenol N-acetylglucosamine transferase (365 aa).

Residues 10–12 (TAG), N124, R161, S195, I248, and Q292 each bind UDP-N-acetyl-alpha-D-glucosamine.

This sequence belongs to the glycosyltransferase 28 family. MurG subfamily.

Its subcellular location is the cell membrane. The enzyme catalyses di-trans,octa-cis-undecaprenyl diphospho-N-acetyl-alpha-D-muramoyl-L-alanyl-D-glutamyl-meso-2,6-diaminopimeloyl-D-alanyl-D-alanine + UDP-N-acetyl-alpha-D-glucosamine = di-trans,octa-cis-undecaprenyl diphospho-[N-acetyl-alpha-D-glucosaminyl-(1-&gt;4)]-N-acetyl-alpha-D-muramoyl-L-alanyl-D-glutamyl-meso-2,6-diaminopimeloyl-D-alanyl-D-alanine + UDP + H(+). It functions in the pathway cell wall biogenesis; peptidoglycan biosynthesis. In terms of biological role, cell wall formation. Catalyzes the transfer of a GlcNAc subunit on undecaprenyl-pyrophosphoryl-MurNAc-pentapeptide (lipid intermediate I) to form undecaprenyl-pyrophosphoryl-MurNAc-(pentapeptide)GlcNAc (lipid intermediate II). This Nocardioides sp. (strain ATCC BAA-499 / JS614) protein is UDP-N-acetylglucosamine--N-acetylmuramyl-(pentapeptide) pyrophosphoryl-undecaprenol N-acetylglucosamine transferase.